Reading from the N-terminus, the 394-residue chain is MPDYQYKRIFLVVMDSVGIGEAPDAAEFNDVGADTLGHIAEKMNGLHMPNMAKLGLSHIKEIKGIPADEKPLAYYGKMQEASNGKDTMTGHWEIMGLYIDTPFRVFPDGFPDELLNELKEKTGRGIIGNKPASGTEILDELGEEHMKTGDLIVYTSADSVLQIAAHEEVVPLDELYRICEIARELTLDEKYMVGRIIARPFVGEPGAFVRTPNRHDYALKPFDRTVMNELKDDGLDVIAIGKISDIYDGEGITSSLRTKSNMDGMDKLVDTLKTDFTGISFLNLVDFDALYGHRRDPEGYGKALEEFDARLPEVFDLLKEDDLLVITADHGNDPVHHGTDHTREYVPLIAYSKKHQGANELPTSKTFADLGATVADNFKTTMPKYGTSFLSKLK.

Mn(2+) is bound by residues Asp15, Asp288, His293, Asp329, His330, and His341.

It belongs to the phosphopentomutase family. Mn(2+) serves as cofactor.

It localises to the cytoplasm. It carries out the reaction 2-deoxy-alpha-D-ribose 1-phosphate = 2-deoxy-D-ribose 5-phosphate. It catalyses the reaction alpha-D-ribose 1-phosphate = D-ribose 5-phosphate. Its pathway is carbohydrate degradation; 2-deoxy-D-ribose 1-phosphate degradation; D-glyceraldehyde 3-phosphate and acetaldehyde from 2-deoxy-alpha-D-ribose 1-phosphate: step 1/2. In terms of biological role, isomerase that catalyzes the conversion of deoxy-ribose 1-phosphate (dRib-1-P) and ribose 1-phosphate (Rib-1-P) to deoxy-ribose 5-phosphate (dRib-5-P) and ribose 5-phosphate (Rib-5-P), respectively. The polypeptide is Phosphopentomutase (Bacillus pumilus (strain SAFR-032)).